Reading from the N-terminus, the 1228-residue chain is DNA repair protein rad5 (1228 aa).

Disordered regions lie at residues 1 to 96 (MDRH…GTLT), 194 to 242 (PPVR…VLPS), 280 to 302 (QPPTVARKGQTKPGTPQSIPRVS), and 445 to 474 (KAMDKAKAGDHNTNGLASPPEEAEEGQELE). Residues 34-43 (PSSSPQFSAP) are compositionally biased toward low complexity. Residues 70–83 (HNDDDDDDDDDDDE) are compositionally biased toward acidic residues. The segment covering 211 to 237 (PKKSSTSQARSRSHAQAQPQPQSNTPT) has biased composition (polar residues). Positions 445–454 (KAMDKAKAGD) are enriched in basic and acidic residues. Over residues 465 to 474 (EEAEEGQELE) the composition is skewed to acidic residues. A Helicase ATP-binding domain is found at 574–784 (PKQEQHCLGG…FSLVRFLRVE (211 aa)). 587–594 (DEMGLGKT) lines the ATP pocket. The short motif at 735-738 (DEAH) is the DEAH box element. The RING-type zinc finger occupies 967-1012 (CPICAEEPMIDQAVTGCWHSACKKCLLDYIKHQTDRNEVPRCFQCR). In terms of domain architecture, Helicase C-terminal spans 1060 to 1216 (ALISHLRTLR…MMSDEEKKMQ (157 aa)).

This sequence belongs to the SNF2/RAD54 helicase family.

It is found in the cytoplasm. Its subcellular location is the nucleus. Its function is as follows. Probable helicase, member of the UBC2/RAD6 epistasis group. Functions with DNA repair protein uvs-2/rad18 in error-free postreplication DNA repair. Involved in the maintenance of wild-type rates of instability of simple repetitive sequences such as poly(GT) repeats. Seems to be involved in maintaining a balance which acts in favor of error-prone non-homologous joining during DNA double-strand breaks repairs. The sequence is that of DNA repair protein rad5 (mus-41) from Neurospora crassa (strain ATCC 24698 / 74-OR23-1A / CBS 708.71 / DSM 1257 / FGSC 987).